The primary structure comprises 281 residues: Sulfur carrier protein FdhD (281 aa).

Cys-117 (cysteine persulfide intermediate) is an active-site residue.

It belongs to the FdhD family.

The protein localises to the cytoplasm. Required for formate dehydrogenase (FDH) activity. Acts as a sulfur carrier protein that transfers sulfur from IscS to the molybdenum cofactor prior to its insertion into FDH. The protein is Sulfur carrier protein FdhD of Xanthomonas campestris pv. campestris (strain 8004).